The following is a 185-amino-acid chain: MSHIGSKQIKIPKNVSIDLSMNKIYVRGDLGKLELPLNNINIHLKNIENDQFLILDPINTGTKKQKTASYIMWGTYRTLIENMLIGVSKGYSKTIELVGVGYKAQLIDKKLVLKIGFSIEINYEIPSDIKVDCSRSNIIVISGIDKQKVNQVAAEIRLLRKPEPYKGKGIRYLGEVIRLKEGKKK.

This sequence belongs to the universal ribosomal protein uL6 family.

The protein localises to the mitochondrion. The polypeptide is Large ribosomal subunit protein uL6m (RPL6) (Reclinomonas americana).